The primary structure comprises 492 residues: 3-octaprenyl-4-hydroxybenzoate carboxy-lyase (492 aa).

Residue Asn177 participates in Mn(2+) binding. Prenylated FMN is bound by residues 180–182 (IYR), 194–196 (RWL), and 199–200 (RG). Residue Glu243 coordinates Mn(2+). Asp292 acts as the Proton donor in catalysis.

It belongs to the UbiD family. As to quaternary structure, homohexamer. Prenylated FMN serves as cofactor. Requires Mn(2+) as cofactor.

It is found in the cell membrane. The catalysed reaction is a 4-hydroxy-3-(all-trans-polyprenyl)benzoate + H(+) = a 2-(all-trans-polyprenyl)phenol + CO2. Its pathway is cofactor biosynthesis; ubiquinone biosynthesis. Catalyzes the decarboxylation of 3-octaprenyl-4-hydroxy benzoate to 2-octaprenylphenol, an intermediate step in ubiquinone biosynthesis. This Neisseria meningitidis serogroup C / serotype 2a (strain ATCC 700532 / DSM 15464 / FAM18) protein is 3-octaprenyl-4-hydroxybenzoate carboxy-lyase.